The chain runs to 279 residues: Undecaprenyl-diphosphatase (279 aa).

The next 7 membrane-spanning stretches (helical) occupy residues Phe-10–Ile-30, Leu-48–Phe-68, Leu-96–Leu-116, Gly-128–Ile-148, Ser-203–Phe-223, Ile-229–Ile-249, and Asn-259–Leu-279.

Belongs to the UppP family.

The protein localises to the cell inner membrane. The enzyme catalyses di-trans,octa-cis-undecaprenyl diphosphate + H2O = di-trans,octa-cis-undecaprenyl phosphate + phosphate + H(+). In terms of biological role, catalyzes the dephosphorylation of undecaprenyl diphosphate (UPP). Confers resistance to bacitracin. The chain is Undecaprenyl-diphosphatase from Prochlorococcus marinus (strain NATL2A).